A 406-amino-acid chain; its full sequence is Ribonuclease D (406 aa).

Positions 26–193 (LITQTTDLEI…VYLLLKKQLE (168 aa)) constitute a 3'-5' exonuclease domain. An HRDC domain is found at 231–312 (KPRELAVLQK…HEGLEVDLAT (82 aa)).

It belongs to the RNase D family. The cofactor is a divalent metal cation.

The protein resides in the cytoplasm. It catalyses the reaction Exonucleolytic cleavage that removes extra residues from the 3'-terminus of tRNA to produce 5'-mononucleotides.. In terms of biological role, exonuclease involved in the 3' processing of various precursor tRNAs. Initiates hydrolysis at the 3'-terminus of an RNA molecule and releases 5'-mononucleotides. The polypeptide is Ribonuclease D (Bartonella henselae (strain ATCC 49882 / DSM 28221 / CCUG 30454 / Houston 1) (Rochalimaea henselae)).